The following is a 410-amino-acid chain: F-box/WD repeat-containing protein 4 (410 aa).

Positions 23–69 constitute an F-box domain; it reads GPALWRLPEELLLLICSYLDTRALGRLAQVCRWLRRFTSCDLLWRPI. WD repeat units lie at residues 159-196, 198-235, 289-327, and 333-372; these read GHDEDVCHFVLANSHIVSAGGDGKIGVHKIHSTFTVKY, AHEQEVNCVDCKGGIIVSGSRDRTAKVWPLASGRLGQC, PPGAGVLDVMYESPSTLLSCGYDTYVRYWDLRTSTRKCV, and PHDSTFYCLQTDGNHLLATGSSYYGLVRLWDRRQRACLHA.

As to quaternary structure, part of a SCF (SKP1-cullin-F-box) protein ligase complex. Interacts with POUF51.

Functionally, probably recognizes and binds to some phosphorylated proteins and promotes their ubiquitination and degradation. Likely to be involved in key signaling pathways crucial for normal limb development. May participate in Wnt signaling. The sequence is that of F-box/WD repeat-containing protein 4 (Fbxw4) from Mus musculus (Mouse).